Consider the following 356-residue polypeptide: Photosynthetic reaction center cytochrome c subunit (356 aa).

A signal peptide spans 1–20 (MKQLIVNSVATVALASLVAG). Cys21 is lipidated: S-diacylglycerol cysteine. Heme-binding residues include Met94, Cys107, Cys110, His111, Met130, His144, Cys152, Cys155, His156, Met253, Cys264, Cys267, His268, Cys325, Cys328, and His329.

As to quaternary structure, component of the photosynthetic reaction center composed of protein subunits L (PufL), M (PufM), H (PuhA) and cytochrome C (PufC). Post-translationally, binds 4 heme groups per subunit. After the signal sequence is removed, the N-terminal cysteine is modified to form a diacylglyceride thioether, but the alpha-amino group is free and is not N-palmitoylated.

Its subcellular location is the cellular chromatophore membrane. Functionally, the reaction center of purple bacteria contains a tightly bound cytochrome molecule which re-reduces the photo oxidized primary electron donor. This chain is Photosynthetic reaction center cytochrome c subunit, found in Blastochloris viridis (Rhodopseudomonas viridis).